A 294-amino-acid chain; its full sequence is Probable WRKY transcription factor 70 (294 aa).

The tract at residues 72–94 is disordered; sequence SQNASCDNDGKFEDSGDSRKRLG. Basic and acidic residues predominate over residues 79-91; that stretch reads NDGKFEDSGDSRK. The short motif at 90-97 is the Nuclear localization signal element; sequence RKRLGPVK. Positions 114–182 form a DNA-binding region, WRKY; it reads IESTILEDAF…YIGNHTCNTN (69 aa). Residues 201–229 form a disordered region; that stretch reads SEDHKSPSLSTSMKEEDNPHRHHGSSTEN.

The protein belongs to the WRKY group III family. In terms of assembly, interacts with WRKY30. Binds to BZR2/BES1 to cooperatively regulate the expression of target genes. Binds to unmodified (i.e. not sumoylated) NPR1. Phosphorylated and destabilized by ASK7/BIN2. Expressed in leaves and flowers.

The protein localises to the nucleus. Functionally, transcription factor involved in senescence, biotic and abiotic stress responses by modulating various phytohormones signaling pathways. Interacts specifically with the W box (5'-(T)TGAC[CT]-3'), a frequently occurring elicitor-responsive cis-acting element. Binds to the 5'-[CT]GACTTTT-3' motif in promoters of target genes to induce their expression. Binding to the W-box element of PR-1 promoter is mediated by not-sumoylated NPR1 in the absence of salicylic acid. Plays an important but not indispensable role in jasmonate and salicylic acid signaling. Positively regulates the salicylic acid (SA)-mediated signal pathway, but negatively the jasmonic acid (JA)-mediated signal pathway, thus determining the balance between these mutually antagonistic pathways. Together with WRKY46, WRKY53 and WRKY54, prevents defense response to the necrotrophic pathogens P.carotovorum and B.cinerea, but promotes defense responses (including SA-induced pathogenesis-related (PR) genes expression) against biotrophic/hemibiotrophic SA-monitored pathogens (e.g. P.syringae, E.carotovora subsp. carotovora SCC3193 and E.cichoracearum), probably by regulating negatively the JA/ET and positively the SA signaling pathways. Contributes to the suppression of jasmonic acid (MeJA)-induced expression of JA-responsive genes (e.g. PDF1.2). Promotes susceptibility to JA-monitored pathogens (e.g. A.brassicicola), probably by facilitating SA-controlled suppression of JA-mediated defense. Represses the biosynthesis of the phytoalexin camalexin and indol-3-ylmethyl glucosinolate (IGS). Represses both SA and JA/ethylene (ET) mediated defense marker genes expression. Negative regulator of SA biosynthesis. Negative regulator of EDS1-dependent defense against E.amylovora. Required for RPP4-mediated disease resistance and basal defense against H.parasitica, probably via late up-regulation (LURP) of resistance genes (e.g. CML10/CaBP22 and LURP1). Probably involved in defense responses toward insects (e.g. P.xylostella and B.brassicae). Together with WRKY54, negative regulator of developmental senescence, probably via the regulation of several senescence-associated markers genes. Together with WRKY46 and WRKY54, promotes brassinosteroid (BR)-regulated plant growth but prevent drought response by modulating gene expression. In collaboration with WRKY54, prevents stomatal closure and, consequently, osmotic stress tolerance. Regulates rhizobacterium B.cereus AR156-induced systemic resistance (ISR) to P.syringae pv. tomato DC3000. The polypeptide is Probable WRKY transcription factor 70 (Arabidopsis thaliana (Mouse-ear cress)).